We begin with the raw amino-acid sequence, 277 residues long: Ubiquinone biosynthesis protein COQ4, mitochondrial (277 aa).

The N-terminal 14 residues, 1 to 14 (MLTKRALRTTDPYR), are a transit peptide targeting the mitochondrion. Zn(2+)-binding residues include histidine 157, aspartate 158, histidine 161, and glutamate 173.

Belongs to the COQ4 family. Component of a multi-subunit COQ enzyme complex, composed of at least COQ3, COQ4, COQ5, COQ6, COQ7 and COQ9. It depends on Zn(2+) as a cofactor.

It localises to the mitochondrion inner membrane. It catalyses the reaction a 4-hydroxy-3-methoxy-5-(all-trans-polyprenyl)benzoate + H(+) = a 2-methoxy-6-(all-trans-polyprenyl)phenol + CO2. Its pathway is cofactor biosynthesis; ubiquinone biosynthesis. Functionally, lyase that catalyzes the C1-decarboxylation of 4-hydroxy-3-methoxy-5-(all-trans-polyprenyl)benzoic acid into 2-methoxy-6-(all-trans-polyprenyl)phenol during ubiquinone biosynthesis. The sequence is that of Ubiquinone biosynthesis protein COQ4, mitochondrial from Ajellomyces capsulatus (strain G186AR / H82 / ATCC MYA-2454 / RMSCC 2432) (Darling's disease fungus).